The primary structure comprises 443 residues: Two-pore potassium channel 2 (443 aa).

The Cytoplasmic segment spans residues methionine 1–threonine 144. The tract at residues serine 67–proline 109 is disordered. Residues alanine 72 to threonine 98 are compositionally biased toward low complexity. A helical membrane pass occupies residues isoleucine 145–tryptophan 165. The segment at residues aspartate 181–proline 200 is an intramembrane region (pore-forming). The helical transmembrane segment at phenylalanine 208 to valine 228 threads the bilayer. Residues threonine 229–valine 274 are Cytoplasmic-facing. Residues glycine 275–valine 295 traverse the membrane as a helical segment. An intramembrane region (pore-forming) is located at residues aspartate 302–phenylalanine 321. A helical transmembrane segment spans residues leucine 328–leucine 348. At alanine 349–isoleucine 443 the chain is on the cytoplasmic side. EF-hand domains follow at residues leucine 365–lysine 400 and lysine 404–threonine 439. The Ca(2+) site is built by aspartate 378, aspartate 380, asparagine 382, cysteine 384, glutamate 389, aspartate 417, serine 421, arginine 423, and aspartate 428.

This sequence belongs to the two pore domain potassium channel (TC 1.A.1.7) family. Homodimer. In terms of tissue distribution, expressed in roots, stems, leaves and flowers.

It is found in the vacuole membrane. Probable voltage-independent potassium-selective tonoplast ion channel. This Arabidopsis thaliana (Mouse-ear cress) protein is Two-pore potassium channel 2 (TPK2).